A 430-amino-acid polypeptide reads, in one-letter code: Carbamoyl phosphate synthase arginine-specific small chain (430 aa).

The N-terminal 9 residues, 1–9, are a transit peptide targeting the mitochondrion; sequence MLSATKRYL. Positions 219–407 constitute a Glutamine amidotransferase type-1 domain; sequence HIAVLDCGAK…FDNINVYKKS (189 aa). The active-site Nucleophile is cysteine 296. Catalysis depends on residues histidine 380 and glutamate 382.

The protein belongs to the CarA family. Heterodimer composed of 2 chains; the small (or glutamine) chain promotes the hydrolysis of glutamine to ammonia, which is used by the large (or ammonia) chain to synthesize carbamoyl phosphate.

It localises to the mitochondrion matrix. The catalysed reaction is hydrogencarbonate + L-glutamine + 2 ATP + H2O = carbamoyl phosphate + L-glutamate + 2 ADP + phosphate + 2 H(+). It catalyses the reaction L-glutamine + H2O = L-glutamate + NH4(+). It functions in the pathway amino-acid biosynthesis; L-arginine biosynthesis; carbamoyl phosphate from bicarbonate: step 1/1. In terms of biological role, small subunit of the arginine-specific carbamoyl phosphate synthase (CPSase). CPSase catalyzes the formation of carbamoyl phosphate from the ammonia moiety of glutamine, carbonate, and phosphate donated by ATP, the first step of the arginine biosynthetic pathway. The small subunit (glutamine amidotransferase) binds and cleaves glutamine to supply the large subunit with the substrate ammonia. This Candida albicans (strain SC5314 / ATCC MYA-2876) (Yeast) protein is Carbamoyl phosphate synthase arginine-specific small chain (CPA1).